The chain runs to 348 residues: tRNA N6-adenosine threonylcarbamoyltransferase (348 aa).

Fe cation is bound by residues H116 and H120. Substrate-binding positions include 138 to 142 (IISGG), D171, G184, and N282. Residue D310 coordinates Fe cation.

This sequence belongs to the KAE1 / TsaD family. Requires Fe(2+) as cofactor.

The protein localises to the cytoplasm. It carries out the reaction L-threonylcarbamoyladenylate + adenosine(37) in tRNA = N(6)-L-threonylcarbamoyladenosine(37) in tRNA + AMP + H(+). Functionally, required for the formation of a threonylcarbamoyl group on adenosine at position 37 (t(6)A37) in tRNAs that read codons beginning with adenine. Is involved in the transfer of the threonylcarbamoyl moiety of threonylcarbamoyl-AMP (TC-AMP) to the N6 group of A37, together with TsaE and TsaB. TsaD likely plays a direct catalytic role in this reaction. The chain is tRNA N6-adenosine threonylcarbamoyltransferase from Ehrlichia ruminantium (strain Welgevonden).